Consider the following 573-residue polypeptide: Solute carrier family 41 member 2 (573 aa).

At 1–162 the chain is on the extracellular side; that stretch reads MTHSKGRPVT…KESSGVMALQ (162 aa). A phosphoserine mark is found at Ser137 and Ser138. The chain crosses the membrane as a helical span at residues 163–183; that stretch reads ILVPFLLAGFGTVSAGMVLDI. Topologically, residues 184–195 are cytoplasmic; that stretch reads VQHWEVFKNVTE. Residues 196–216 form a helical membrane-spanning segment; it reads VFILVPALLGLKGNLEMTLAS. Over 217–245 the chain is Extracellular; the sequence is RLSTAVNVGKMDSPIEKWNLIIGNLALKQ. A helical membrane pass occupies residues 246–266; it reads VQATVVGFLAAVAAIILGWIP. Residues 267 to 282 are Cytoplasmic-facing; that stretch reads EGKYYLSHSILLCSSS. Residues 283–303 form a helical membrane-spanning segment; that stretch reads VATAFIASLLQGIIMVGVIVG. The Extracellular segment spans residues 304–313; the sequence is SKKTGINPDN. Residues 314-334 traverse the membrane as a helical segment; that stretch reads VATPIAASFGDLITLAILAWI. Topologically, residues 335-347 are cytoplasmic; it reads SQGLYSCLETYYY. Residues 348 to 368 traverse the membrane as a helical segment; sequence ISPLVCAFFLALTPIWIIIAA. The Extracellular segment spans residues 369–376; the sequence is KHPATRTV. The chain crosses the membrane as a helical span at residues 377-397; it reads LHSGWEPVITAMVISSIGGLI. At 398-406 the chain is on the cytoplasmic side; the sequence is LDTTVSDPN. The helical transmembrane segment at 407–427 threads the bilayer; it reads LVGIVVYTPVINGIGGNLVAI. Over 428-469 the chain is Extracellular; sequence QASRISTYLHLHSIPGELPEEPKGCSYPFRTFFGSGVNNKSA. A helical membrane pass occupies residues 470-490; that stretch reads QVLLLFVIPGHLIFLYTIHLM. At 491–498 the chain is on the cytoplasmic side; it reads KSGHTSLT. A helical membrane pass occupies residues 499–519; it reads VVFVVVYLFAAVLQVFTLLWI. Topologically, residues 520 to 543 are extracellular; it reads ADWMVHRFWRKGKDPDSFSIPYLT. Residues 544 to 564 traverse the membrane as a helical segment; the sequence is ALGDLLGTALLALSFHFLWLI. Residues 565–573 lie on the Cytoplasmic side of the membrane; it reads GDRDGDVGD.

It belongs to the SLC41A transporter family.

It localises to the cell membrane. It catalyses the reaction Mg(2+)(in) = Mg(2+)(out). It carries out the reaction Mn(2+)(in) = Mn(2+)(out). The catalysed reaction is Co(2+)(in) = Co(2+)(out). The enzyme catalyses Ni(2+)(in) = Ni(2+)(out). It catalyses the reaction Fe(2+)(in) = Fe(2+)(out). Functionally, acts as a plasma-membrane magnesium transporter. Can also mediate the transport of other divalent metal cations in an order of Ba(2+) &gt; Ni(2+) &gt; Co(2+) &gt; Fe(2+) &gt; Mn(2+). The sequence is that of Solute carrier family 41 member 2 (Slc41a2) from Mus musculus (Mouse).